A 274-amino-acid chain; its full sequence is Orotidine 5'-phosphate decarboxylase (274 aa).

The active-site Proton donor is lysine 95.

The protein belongs to the OMP decarboxylase family. Type 2 subfamily.

The catalysed reaction is orotidine 5'-phosphate + H(+) = UMP + CO2. Its pathway is pyrimidine metabolism; UMP biosynthesis via de novo pathway; UMP from orotate: step 2/2. This Verminephrobacter eiseniae (strain EF01-2) protein is Orotidine 5'-phosphate decarboxylase.